We begin with the raw amino-acid sequence, 466 residues long: Sulfate adenylyltransferase subunit 1 (466 aa).

In terms of domain architecture, tr-type G spans 22–237 (KELVRFLTCG…LNTIDVKTQE (216 aa)). A G1 region spans residues 31 to 38 (GSVDDGKS). Position 31 to 38 (31 to 38 (GSVDDGKS)) interacts with GTP. The G2 stretch occupies residues 89 to 93 (GITID). A G3 region spans residues 110-113 (DTPG). GTP is bound by residues 110 to 114 (DTPGH) and 165 to 168 (NKMD). Positions 165 to 168 (NKMD) are G4. The G5 stretch occupies residues 202-204 (SAL).

The protein belongs to the TRAFAC class translation factor GTPase superfamily. Classic translation factor GTPase family. CysN/NodQ subfamily. As to quaternary structure, heterodimer composed of CysD, the smaller subunit, and CysN.

It carries out the reaction sulfate + ATP + H(+) = adenosine 5'-phosphosulfate + diphosphate. It participates in sulfur metabolism; hydrogen sulfide biosynthesis; sulfite from sulfate: step 1/3. Functionally, with CysD forms the ATP sulfurylase (ATPS) that catalyzes the adenylation of sulfate producing adenosine 5'-phosphosulfate (APS) and diphosphate, the first enzymatic step in sulfur assimilation pathway. APS synthesis involves the formation of a high-energy phosphoric-sulfuric acid anhydride bond driven by GTP hydrolysis by CysN coupled to ATP hydrolysis by CysD. In Colwellia psychrerythraea (strain 34H / ATCC BAA-681) (Vibrio psychroerythus), this protein is Sulfate adenylyltransferase subunit 1.